Reading from the N-terminus, the 689-residue chain is Pentatricopeptide repeat-containing protein At1g71460, chloroplastic (689 aa).

A chloroplast-targeting transit peptide spans 1–49 (MEVVSSLGIRDLPASLSVTTSLNHRPHRSDKDGAPAKSPIRPSRTRRPS). Residues 16-68 (LSVTTSLNHRPHRSDKDGAPAKSPIRPSRTRRPSTSPAKKPKPFRERDAFPSS) form a disordered region. Residues 38–52 (SPIRPSRTRRPSTSP) show a composition bias toward low complexity. PPR repeat units lie at residues 75–109 (NPYI…GIPV), 110–144 (NATT…GLES), 145–175 (NEFL…STSS), 176–212 (NVYS…GVDL), 213–247 (NVYS…GLFN), 248–282 (SVFL…DIVV), 283–309 (WGAM…MISE), 315–350 (NSVI…NYVE), 351–381 (QPFV…SKQR), 382–416 (NAIS…GFRP), 417–451 (DVVT…LFLP), 452–482 (NVSL…LEQR), 483–517 (NVKA…KHRP), 518–552 (DSVT…EFES), 553–583 (IPFV…VAVK), 584–618 (GSLT…GFTP), 619–649 (NTFT…MLRM), and 655–689 (SEEH…SLQT).

This sequence belongs to the PPR family. PCMP-A subfamily.

The protein resides in the plastid. It is found in the chloroplast. This chain is Pentatricopeptide repeat-containing protein At1g71460, chloroplastic (PCMP-A3), found in Arabidopsis thaliana (Mouse-ear cress).